We begin with the raw amino-acid sequence, 328 residues long: BURP domain-containing protein 11 (328 aa).

The BURP domain maps to 74–318 (FFFRDALRPG…TKLSIVWVPR (245 aa)).

As to expression, expressed in roots.

This chain is BURP domain-containing protein 11 (BURP11), found in Oryza sativa subsp. japonica (Rice).